A 224-amino-acid polypeptide reads, in one-letter code: Ribonuclease HII (224 aa).

Positions 36 to 224 (RGVAGVDEVG…RRSFLRRFLG (189 aa)) constitute an RNase H type-2 domain. A divalent metal cation contacts are provided by Asp42, Glu43, and Asp138.

This sequence belongs to the RNase HII family. Mn(2+) serves as cofactor. The cofactor is Mg(2+).

The protein resides in the cytoplasm. The catalysed reaction is Endonucleolytic cleavage to 5'-phosphomonoester.. Its function is as follows. Endonuclease that specifically degrades the RNA of RNA-DNA hybrids. The chain is Ribonuclease HII from Parasynechococcus marenigrum (strain WH8102).